Here is a 986-residue protein sequence, read N- to C-terminus: Bifunctional glutamine synthetase adenylyltransferase/adenylyl-removing enzyme (986 aa).

The adenylyl removase stretch occupies residues 1–482 (MVTTVISNVK…RYGRLFAGEE (482 aa)). The adenylyl transferase stretch occupies residues 486-986 (SRFGSLVFTG…RAAYEAVVKG (501 aa)).

The protein belongs to the GlnE family. It depends on Mg(2+) as a cofactor.

It carries out the reaction [glutamine synthetase]-O(4)-(5'-adenylyl)-L-tyrosine + phosphate = [glutamine synthetase]-L-tyrosine + ADP. The catalysed reaction is [glutamine synthetase]-L-tyrosine + ATP = [glutamine synthetase]-O(4)-(5'-adenylyl)-L-tyrosine + diphosphate. Its function is as follows. Involved in the regulation of glutamine synthetase GlnA, a key enzyme in the process to assimilate ammonia. When cellular nitrogen levels are high, the C-terminal adenylyl transferase (AT) inactivates GlnA by covalent transfer of an adenylyl group from ATP to specific tyrosine residue of GlnA, thus reducing its activity. Conversely, when nitrogen levels are low, the N-terminal adenylyl removase (AR) activates GlnA by removing the adenylyl group by phosphorolysis, increasing its activity. The regulatory region of GlnE binds the signal transduction protein PII (GlnB) which indicates the nitrogen status of the cell. In Caulobacter vibrioides (strain ATCC 19089 / CIP 103742 / CB 15) (Caulobacter crescentus), this protein is Bifunctional glutamine synthetase adenylyltransferase/adenylyl-removing enzyme.